Consider the following 782-residue polypeptide: Protein phosphatase 1 regulatory subunit 12C (782 aa).

2 stretches are compositionally biased toward low complexity: residues 1–19 and 77–88; these read MSGEDGPAAGPGAAAAAAA and DPGPGSGAASDP. Disordered stretches follow at residues 1–45 and 77–98; these read MSGE…GERR and DPGPGSGAASDPAVPPPARAVL. Ser-2 carries the post-translational modification N-acetylserine. ANK repeat units lie at residues 104 to 133, 137 to 166, 230 to 259, and 263 to 292; these read DGISALHQACIDENLEVVRFLVEQGATVNQ, EGWTPLHVAASCGYLDIARYLLSHGANIAA, TGASALHVAAAKGYIEVMRLLLQAGYDTEL, and DGWTPLHAAAHWGVEDACRLLAEHGGGMDS. Residues 301–332 are a coiled coil; that stretch reads CDLADEDVMNLLEELAQKQEDLRNQKEGSQGR. Positions 321 to 685 are disordered; sequence DLRNQKEGSQ…HEEPDGGFRK (365 aa). A compositionally biased stretch (polar residues) spans 332 to 341; that stretch reads RGQESQVPSS. Over residues 353–369 the composition is skewed to basic and acidic residues; sequence SSREKISLQDLSKERRP. A compositionally biased stretch (low complexity) spans 401–413; the sequence is VSSPVSSNPKSPV. A phosphoserine mark is found at Ser-403, Ser-411, Ser-431, Ser-454, and Ser-509. Residues 451 to 465 are compositionally biased toward polar residues; it reads RSASSSLLEKASTQA. The span at 537–546 shows a compositional bias: basic and acidic residues; it reads VRDEESESQR. Residues 547 to 557 show a composition bias toward basic residues; sequence KARSRLMRQSR. Residue Thr-560 is modified to Phosphothreonine. At Ser-647 the chain carries Phosphoserine. A compositionally biased stretch (basic and acidic residues) spans 664 to 685; it reads SQRDLVLESKQEHEEPDGGFRK. Residues 681-782 adopt a coiled-coil conformation; sequence GGFRKMYTEL…LIRVISKLSK (102 aa).

In terms of assembly, PP1 comprises a catalytic subunit, PPP1CA, PPP1CB or PPP1CC, and one or several targeting or regulatory subunits. PPP1R12C mediates binding to myosin. Interacts via its N-terminus with PPP1CB. Interacts with IL16. Interacts with the coiled-coil domain of MPRIP. Interacts with NOD2. Post-translationally, phosphorylation at Thr-560 is essential for its interaction with PPP1CB.

The protein resides in the cytoplasm. It localises to the cytoskeleton. The protein localises to the stress fiber. Regulates myosin phosphatase activity. The protein is Protein phosphatase 1 regulatory subunit 12C of Mus musculus (Mouse).